Consider the following 128-residue polypeptide: MKMTKLTTLLLTATLGLASGAALAAESNAQSSNGQANSAANAGQVAPDARQNVAPNDVNNNDINTNGNTNSTMQHPDGSTMNHDGMTKDEEHKNTMCKDGRCPDINKKVETGNGVNNDVNTKTDGTTQ.

The first 24 residues, 1–24, serve as a signal peptide directing secretion; sequence MKMTKLTTLLLTATLGLASGAALA. 2 stretches are compositionally biased toward low complexity: residues 24–44 and 52–70; these read AAES…NAGQ and NVAP…GNTN. Residues 24–128 are disordered; it reads AAESNAQSSN…VNTKTDGTTQ (105 aa). Positions 71-82 are enriched in polar residues; it reads STMQHPDGSTMN. The segment covering 85–110 has biased composition (basic and acidic residues); the sequence is GMTKDEEHKNTMCKDGRCPDINKKVE. Polar residues predominate over residues 113 to 128; it reads NGVNNDVNTKTDGTTQ.

This is an uncharacterized protein from Salmonella typhi.